A 268-amino-acid chain; its full sequence is Tryptophan synthase alpha chain (268 aa).

Catalysis depends on proton acceptor residues Glu-49 and Asp-60.

This sequence belongs to the TrpA family. As to quaternary structure, tetramer of two alpha and two beta chains.

It carries out the reaction (1S,2R)-1-C-(indol-3-yl)glycerol 3-phosphate + L-serine = D-glyceraldehyde 3-phosphate + L-tryptophan + H2O. The protein operates within amino-acid biosynthesis; L-tryptophan biosynthesis; L-tryptophan from chorismate: step 5/5. The alpha subunit is responsible for the aldol cleavage of indoleglycerol phosphate to indole and glyceraldehyde 3-phosphate. This Salmonella agona (strain SL483) protein is Tryptophan synthase alpha chain.